The primary structure comprises 306 residues: N-acetylmuramic acid 6-phosphate etherase (306 aa).

Residues 59-222 (TSQALAKGGR…STGTMVMLGK (164 aa)) enclose the SIS domain. E87 acts as the Proton donor in catalysis. E118 is an active-site residue.

The protein belongs to the GCKR-like family. MurNAc-6-P etherase subfamily. As to quaternary structure, homodimer.

The catalysed reaction is N-acetyl-D-muramate 6-phosphate + H2O = N-acetyl-D-glucosamine 6-phosphate + (R)-lactate. The protein operates within amino-sugar metabolism; N-acetylmuramate degradation. Functionally, specifically catalyzes the cleavage of the D-lactyl ether substituent of MurNAc 6-phosphate, producing GlcNAc 6-phosphate and D-lactate. In Microcystis aeruginosa (strain NIES-843 / IAM M-2473), this protein is N-acetylmuramic acid 6-phosphate etherase.